We begin with the raw amino-acid sequence, 127 residues long: Large ribosomal subunit protein bL12 (127 aa).

The protein belongs to the bacterial ribosomal protein bL12 family. As to quaternary structure, homodimer. Part of the ribosomal stalk of the 50S ribosomal subunit. Forms a multimeric L10(L12)X complex, where L10 forms an elongated spine to which 2 to 4 L12 dimers bind in a sequential fashion. Binds GTP-bound translation factors.

Forms part of the ribosomal stalk which helps the ribosome interact with GTP-bound translation factors. Is thus essential for accurate translation. This chain is Large ribosomal subunit protein bL12, found in Syntrophobacter fumaroxidans (strain DSM 10017 / MPOB).